The following is a 149-amino-acid chain: MTKGQRLIKIREIITQSEIETQDELVEELRNAGYKVTQATVSRDIKELHLVKVPLNDGRYKYSLPADQRFNPLGKLRRLLGDSFISIDSAQNLIVMHVLPGNANALGVLLDHLNWPELLGTVCGDDTILMITRNEEAATEVTERILGML.

Belongs to the ArgR family.

The protein localises to the cytoplasm. It participates in amino-acid biosynthesis; L-arginine biosynthesis [regulation]. Functionally, regulates arginine biosynthesis genes. In Exiguobacterium sibiricum (strain DSM 17290 / CCUG 55495 / CIP 109462 / JCM 13490 / 255-15), this protein is Arginine repressor.